The sequence spans 432 residues: 3-phosphoshikimate 1-carboxyvinyltransferase (432 aa).

The 3-phosphoshikimate site is built by K23, S24, and R28. K23 serves as a coordination point for phosphoenolpyruvate. The phosphoenolpyruvate site is built by G95 and R123. 4 residues coordinate 3-phosphoshikimate: S166, Q168, D315, and K342. Q168 contacts phosphoenolpyruvate. D315 acts as the Proton acceptor in catalysis. Phosphoenolpyruvate contacts are provided by R346 and R390.

The protein belongs to the EPSP synthase family. Monomer.

The protein resides in the cytoplasm. It catalyses the reaction 3-phosphoshikimate + phosphoenolpyruvate = 5-O-(1-carboxyvinyl)-3-phosphoshikimate + phosphate. Its pathway is metabolic intermediate biosynthesis; chorismate biosynthesis; chorismate from D-erythrose 4-phosphate and phosphoenolpyruvate: step 6/7. Functionally, catalyzes the transfer of the enolpyruvyl moiety of phosphoenolpyruvate (PEP) to the 5-hydroxyl of shikimate-3-phosphate (S3P) to produce enolpyruvyl shikimate-3-phosphate and inorganic phosphate. This Lactiplantibacillus plantarum (strain ATCC BAA-793 / NCIMB 8826 / WCFS1) (Lactobacillus plantarum) protein is 3-phosphoshikimate 1-carboxyvinyltransferase.